Reading from the N-terminus, the 538-residue chain is Phosphoenolpyruvate carboxykinase (ATP) (538 aa).

Residues arginine 61, tyrosine 195, and lysine 201 each contribute to the substrate site. ATP-binding positions include lysine 201, histidine 220, and 236 to 244; that span reads GLSGTGKTT. Mn(2+) contacts are provided by lysine 201 and histidine 220. Aspartate 257 is a binding site for Mn(2+). 3 residues coordinate ATP: glutamate 285, arginine 323, and threonine 449. Arginine 323 is a binding site for substrate.

The protein belongs to the phosphoenolpyruvate carboxykinase (ATP) family. Mn(2+) serves as cofactor.

The protein localises to the cytoplasm. It carries out the reaction oxaloacetate + ATP = phosphoenolpyruvate + ADP + CO2. It participates in carbohydrate biosynthesis; gluconeogenesis. Involved in the gluconeogenesis. Catalyzes the conversion of oxaloacetate (OAA) to phosphoenolpyruvate (PEP) through direct phosphoryl transfer between the nucleoside triphosphate and OAA. In Nitrobacter winogradskyi (strain ATCC 25391 / DSM 10237 / CIP 104748 / NCIMB 11846 / Nb-255), this protein is Phosphoenolpyruvate carboxykinase (ATP).